We begin with the raw amino-acid sequence, 546 residues long: Chaperonin GroEL (546 aa).

ATP-binding positions include 30–33 (TLGP), K51, 87–91 (DGTTT), G415, 479–481 (NAA), and D495. Positions 526-546 (KEEKPDLSGAGAGMGGMGGMM) are disordered. Gly residues predominate over residues 535–546 (AGAGMGGMGGMM).

Belongs to the chaperonin (HSP60) family. Forms a cylinder of 14 subunits composed of two heptameric rings stacked back-to-back. Interacts with the co-chaperonin GroES.

It is found in the cytoplasm. The enzyme catalyses ATP + H2O + a folded polypeptide = ADP + phosphate + an unfolded polypeptide.. In terms of biological role, together with its co-chaperonin GroES, plays an essential role in assisting protein folding. The GroEL-GroES system forms a nano-cage that allows encapsulation of the non-native substrate proteins and provides a physical environment optimized to promote and accelerate protein folding. In Wigglesworthia glossinidia brevipalpis, this protein is Chaperonin GroEL.